A 337-amino-acid polypeptide reads, in one-letter code: Hsp90 co-chaperone Cdc37-like 1 (337 aa).

Residues 1–11 are compositionally biased toward pro residues; sequence MEQPWPPPGPW. The segment at 1 to 40 is disordered; sequence MEQPWPPPGPWSLPRAEGEAEEESDFDVFPSSPRCPQLPG. The tract at residues 2 to 171 is self-association; it reads EQPWPPPGPW…YEQKIRHFGM (170 aa). Residues Ser32 and Ser88 each carry the phosphoserine modification. A coiled-coil region spans residues 84-122; the sequence is HNSESLDQEHAKAQTAVSELRQREEEWRQKEEALVQREK. Residues 147–277 form a self-association and interaction with Hsp90 region; that stretch reads KDTEDEDKSE…SRVRLYSQSQ (131 aa). The interval 267–337 is interaction with Hsp70; the sequence is KSRVRLYSQS…DDEPKMMDTV (71 aa). The tract at residues 278 to 337 is required for interaction with STIP1; sequence SFQPMTVQNHVPHSGVGSIGLLESLPQNPDYLQYSISTALCSLNSVVHKEDDEPKMMDTV.

This sequence belongs to the CDC37 family. In terms of assembly, self-associates. Forms complexes with Hsp70 and Hsp90. Interacts with CDC37, FKBP4, PPID and STIP1. In terms of tissue distribution, expressed in brain, heart, kidney, liver, placenta and skeletal muscle.

It is found in the cytoplasm. In terms of biological role, co-chaperone that binds to numerous proteins and promotes their interaction with Hsp70 and Hsp90. In Homo sapiens (Human), this protein is Hsp90 co-chaperone Cdc37-like 1 (CDC37L1).